A 160-amino-acid polypeptide reads, in one-letter code: Cytochrome b6-f complex subunit 4 (160 aa).

Transmembrane regions (helical) follow at residues 36 to 56 (LLYI…GLAV), 95 to 115 (LLGI…PFIE), and 128 to 148 (IAMA…IGAC).

This sequence belongs to the cytochrome b family. PetD subfamily. The 4 large subunits of the cytochrome b6-f complex are cytochrome b6, subunit IV (17 kDa polypeptide, PetD), cytochrome f and the Rieske protein, while the 4 small subunits are PetG, PetL, PetM and PetN. The complex functions as a dimer.

Its subcellular location is the cellular thylakoid membrane. Its function is as follows. Component of the cytochrome b6-f complex, which mediates electron transfer between photosystem II (PSII) and photosystem I (PSI), cyclic electron flow around PSI, and state transitions. This is Cytochrome b6-f complex subunit 4 from Prochlorococcus marinus (strain MIT 9303).